The primary structure comprises 425 residues: UDP-N-acetylglucosamine 1-carboxyvinyltransferase (425 aa).

23–24 is a binding site for phosphoenolpyruvate; sequence KN. Residue Arg-100 coordinates UDP-N-acetyl-alpha-D-glucosamine. Cys-124 serves as the catalytic Proton donor. A 2-(S-cysteinyl)pyruvic acid O-phosphothioketal modification is found at Cys-124. Asp-313 and Ile-335 together coordinate UDP-N-acetyl-alpha-D-glucosamine.

Belongs to the EPSP synthase family. MurA subfamily.

It localises to the cytoplasm. The catalysed reaction is phosphoenolpyruvate + UDP-N-acetyl-alpha-D-glucosamine = UDP-N-acetyl-3-O-(1-carboxyvinyl)-alpha-D-glucosamine + phosphate. Its pathway is cell wall biogenesis; peptidoglycan biosynthesis. Functionally, cell wall formation. Adds enolpyruvyl to UDP-N-acetylglucosamine. The polypeptide is UDP-N-acetylglucosamine 1-carboxyvinyltransferase (Wolbachia sp. subsp. Brugia malayi (strain TRS)).